A 447-amino-acid polypeptide reads, in one-letter code: UPF0210 protein LBUL_0934 (447 aa).

Belongs to the UPF0210 family. Homodimer.

In Lactobacillus delbrueckii subsp. bulgaricus (strain ATCC BAA-365 / Lb-18), this protein is UPF0210 protein LBUL_0934.